We begin with the raw amino-acid sequence, 161 residues long: Phosphopantetheine adenylyltransferase (161 aa).

Thr9 provides a ligand contact to substrate. ATP is bound by residues Thr9–Phe10 and His17. Substrate is bound by residues Lys41, Leu73, and Arg87. ATP-binding positions include Gly88–Arg90, Glu98, and Tyr123–Thr129.

Belongs to the bacterial CoaD family. Homohexamer. It depends on Mg(2+) as a cofactor.

It localises to the cytoplasm. It carries out the reaction (R)-4'-phosphopantetheine + ATP + H(+) = 3'-dephospho-CoA + diphosphate. Its pathway is cofactor biosynthesis; coenzyme A biosynthesis; CoA from (R)-pantothenate: step 4/5. Reversibly transfers an adenylyl group from ATP to 4'-phosphopantetheine, yielding dephospho-CoA (dPCoA) and pyrophosphate. This is Phosphopantetheine adenylyltransferase from Cupriavidus taiwanensis (strain DSM 17343 / BCRC 17206 / CCUG 44338 / CIP 107171 / LMG 19424 / R1) (Ralstonia taiwanensis (strain LMG 19424)).